A 426-amino-acid chain; its full sequence is D-tagatose-1,6-bisphosphate aldolase subunit KbaZ (426 aa).

The protein belongs to the GatZ/KbaZ family. KbaZ subfamily. In terms of assembly, forms a complex with KbaY.

Its pathway is carbohydrate metabolism; D-tagatose 6-phosphate degradation; D-glyceraldehyde 3-phosphate and glycerone phosphate from D-tagatose 6-phosphate: step 2/2. Functionally, component of the tagatose-1,6-bisphosphate aldolase KbaYZ that is required for full activity and stability of the Y subunit. Could have a chaperone-like function for the proper and stable folding of KbaY. When expressed alone, KbaZ does not show any aldolase activity. The sequence is that of D-tagatose-1,6-bisphosphate aldolase subunit KbaZ from Escherichia coli O17:K52:H18 (strain UMN026 / ExPEC).